The primary structure comprises 287 residues: Thymidylate synthase (287 aa).

Arg-21 lines the dUMP pocket. Position 51 (Asn-51) interacts with (6R)-5,10-methylene-5,6,7,8-tetrahydrofolate. 150–151 (RR) provides a ligand contact to dUMP. The Nucleophile role is filled by Cys-170. Residues 190 to 193 (RSGD), Asn-201, and 231 to 233 (HIY) each bind dUMP. Asp-193 contacts (6R)-5,10-methylene-5,6,7,8-tetrahydrofolate. Residue Ala-286 coordinates (6R)-5,10-methylene-5,6,7,8-tetrahydrofolate.

Belongs to the thymidylate synthase family. Bacterial-type ThyA subfamily. Homodimer.

It localises to the cytoplasm. The catalysed reaction is dUMP + (6R)-5,10-methylene-5,6,7,8-tetrahydrofolate = 7,8-dihydrofolate + dTMP. It participates in pyrimidine metabolism; dTTP biosynthesis. Functionally, catalyzes the reductive methylation of 2'-deoxyuridine-5'-monophosphate (dUMP) to 2'-deoxythymidine-5'-monophosphate (dTMP) while utilizing 5,10-methylenetetrahydrofolate (mTHF) as the methyl donor and reductant in the reaction, yielding dihydrofolate (DHF) as a by-product. This enzymatic reaction provides an intracellular de novo source of dTMP, an essential precursor for DNA biosynthesis. In Mycoplasma genitalium (strain ATCC 33530 / DSM 19775 / NCTC 10195 / G37) (Mycoplasmoides genitalium), this protein is Thymidylate synthase.